We begin with the raw amino-acid sequence, 438 residues long: UDP-N-acetylglucosamine 1-carboxyvinyltransferase 1 (438 aa).

22 to 23 (KN) serves as a coordination point for phosphoenolpyruvate. Residue Arg95 participates in UDP-N-acetyl-alpha-D-glucosamine binding. Cys119 serves as the catalytic Proton donor. Position 119 is a 2-(S-cysteinyl)pyruvic acid O-phosphothioketal (Cys119). UDP-N-acetyl-alpha-D-glucosamine-binding positions include 124-128 (RPIDL), Asp307, and Val329.

The protein belongs to the EPSP synthase family. MurA subfamily.

It is found in the cytoplasm. It catalyses the reaction phosphoenolpyruvate + UDP-N-acetyl-alpha-D-glucosamine = UDP-N-acetyl-3-O-(1-carboxyvinyl)-alpha-D-glucosamine + phosphate. Its pathway is cell wall biogenesis; peptidoglycan biosynthesis. Functionally, cell wall formation. Adds enolpyruvyl to UDP-N-acetylglucosamine. The polypeptide is UDP-N-acetylglucosamine 1-carboxyvinyltransferase 1 (Lactiplantibacillus plantarum (strain ATCC BAA-793 / NCIMB 8826 / WCFS1) (Lactobacillus plantarum)).